We begin with the raw amino-acid sequence, 393 residues long: BEN domain-containing protein 5 (393 aa).

Residues 169 to 212 (RVLYEELLRSYQQQQQEMKHIQHELERTRKQLVQQAKKLKDYGS) adopt a coiled-coil conformation. The BEN domain maps to 274–380 (GSGVWVNEEK…EKIMDINKSC (107 aa)).

In terms of biological role, may act as a transcriptional repressor. This is BEN domain-containing protein 5 (bend5) from Xenopus laevis (African clawed frog).